Reading from the N-terminus, the 454-residue chain is Death-associated protein kinase 3 (454 aa).

The region spanning 13 to 275 (YEMGEELGSG…IAQSLEHSWI (263 aa)) is the Protein kinase domain. Residues 19 to 27 (LGSGQFAIV) and K42 each bind ATP. S50 carries the phosphoserine; by autocatalysis modification. Pyridone 6 is bound by residues E94 and V96. Catalysis depends on D139, which acts as the Proton acceptor. Residues 161-204 (DFGIAHKIEAGNEFKNIFGTPEFVAPEIVNYEPLGLEADMWSIG) form an activation segment region. A phosphothreonine mark is found at T180 and T225. Residue T265 is modified to Phosphothreonine; by autocatalysis and ROCK1. At T299 the chain carries Phosphothreonine; by autocatalysis, DAPK1 and ROCK1. T306 is subject to Phosphothreonine; by autocatalysis. The residue at position 309 (S309) is a Phosphoserine; by DAPK1. Phosphoserine; by autocatalysis and DAPK1 is present on S311. Phosphoserine; by DAPK1 is present on residues S312, S318, and S326. A leucine-zipper region spans residues 427–441 (VASEMRFVQDLVRAL).

The protein belongs to the protein kinase superfamily. CAMK Ser/Thr protein kinase family. DAP kinase subfamily. As to quaternary structure, homooligomer in its kinase-active form (homotrimers and homodimers are reported); monomeric in its kinase-inactive form. Homodimerization is required for activation segment autophosphorylation. Isoform 1 and isoform 2 interact with myosin and PPP1R12A; interaction of isoform 1 with PPP1R12A is inhibited by RhoA dominant negative form. Interacts with NLK, DAXX, STAT3, RHOD (GTP-bound form) and TCP10L. Interacts with PAWR; the interaction is reported conflictingly: according to PubMed:17953487 does not interact with PAWR. Interacts with ULK1; may be a substrate of ULK1. Interacts with LUZP1; the interaction is likely to occur throughout the cell cycle and reduces the LUZP1-mediated suppression of MYL9 phosphorylation. Requires Mg(2+) as cofactor. Post-translationally, the phosphorylation status is critical for kinase activity, oligomerization and intracellular localization. Phosphorylation at Thr-180, Thr-225 and Thr-265 is essential for activity. The phosphorylated form is localized in the cytoplasm promoted by phosphorylation at Thr-299; nuclear translocation or retention is maximal when it is not phosphorylated. Phosphorylation increases the trimeric form, and its dephosphorylation favors a kinase-inactive monomeric form. Both isoform 1 and isoform 2 can undergo autophosphorylation. Widely expressed. Isoform 1 and isoform 2 are expressed in the bladder smooth muscle.

Its subcellular location is the nucleus. The protein resides in the PML body. The protein localises to the cytoplasm. It is found in the cytoskeleton. It localises to the microtubule organizing center. Its subcellular location is the centrosome. The protein resides in the chromosome. The protein localises to the centromere. It is found in the spindle. It localises to the midbody. It catalyses the reaction L-seryl-[protein] + ATP = O-phospho-L-seryl-[protein] + ADP + H(+). The catalysed reaction is L-threonyl-[protein] + ATP = O-phospho-L-threonyl-[protein] + ADP + H(+). Its activity is regulated as follows. A sequential activation is proposed: autophosphorylation at consensus sites is leading to dimerization of the catalytic domain stabilized by phosphorylation at Ser-50 and activation segment exchange (producing an active confirmation of both kinase modules in trans) followed by phosphorylation at Thr-180 in the activation segment and at other regulatory sites. Phosphorylation at Thr-180, Thr-225 and Thr-265 is essential for activity. Oligomerization is required for full enzymatic activity. Inhibited by pyridone-6 (K00225), a potent, ATP-competitive inhibitor. In terms of biological role, serine/threonine kinase which is involved in the regulation of apoptosis, autophagy, transcription, translation and actin cytoskeleton reorganization. Involved in the regulation of smooth muscle contraction. Regulates both type I (caspase-dependent) apoptotic and type II (caspase-independent) autophagic cell deaths signal, depending on the cellular setting. Involved in regulation of starvation-induced autophagy. Regulates myosin phosphorylation in both smooth muscle and non-muscle cells. In smooth muscle, regulates myosin either directly by phosphorylating MYL12B and MYL9 or through inhibition of smooth muscle myosin phosphatase (SMPP1M) via phosphorylation of PPP1R12A; the inhibition of SMPP1M functions to enhance muscle responsiveness to Ca(2+) and promote a contractile state. Phosphorylates MYL12B in non-muscle cells leading to reorganization of actin cytoskeleton. Isoform 2 can phosphorylate myosin, PPP1R12A and MYL12B. Overexpression leads to condensation of actin stress fibers into thick bundles. Involved in actin filament focal adhesion dynamics. The function in both reorganization of actin cytoskeleton and focal adhesion dissolution is modulated by RhoD. Positively regulates canonical Wnt/beta-catenin signaling through interaction with NLK and TCF7L2. Phosphorylates RPL13A on 'Ser-77' upon interferon-gamma activation which is causing RPL13A release from the ribosome, RPL13A association with the GAIT complex and its subsequent involvement in transcript-selective translation inhibition. Enhances transcription from AR-responsive promoters in a hormone- and kinase-dependent manner. Involved in regulation of cell cycle progression and cell proliferation. May be a tumor suppressor. The chain is Death-associated protein kinase 3 (DAPK3) from Homo sapiens (Human).